A 376-amino-acid polypeptide reads, in one-letter code: MHTNVLNLSKKLINISSISPRDLGCQEILIKRLQLLGFFIERINLKDTKNFWAYRGKGKTVTFLGHTDVVPAGSTRKWKTSPFVATIKDGKLFGRGSADMKGSIAAMLIAVENFIKKFPNHKGRISFLITSDEETSGKNGIRKVVSILKEKKEVIDFCLVGEPTSEKILGDCVKNGRRGSLSADLMIYGTQGHIAYPKLFLNPIHNSIPFLLDLSNLIFDKGNLFFEPTSIQISKIFSEKNCTLNMIPGELRVFFNIRFNTLVNKKKIIRIVENLLNKYLIKYSIFWTYHAKPFLSSSNFLLNLLTKCIYKHTNIIPKIKNNGGTSDARFIFNLTDKIIEFGLPNLTIHKVNEYVYINDLLKLQNIYYSFLEKLLL.

Residue H66 participates in Zn(2+) binding. D68 is a catalytic residue. D99 serves as a coordination point for Zn(2+). The active-site Proton acceptor is the E133. Positions 134, 162, and 349 each coordinate Zn(2+).

Belongs to the peptidase M20A family. DapE subfamily. In terms of assembly, homodimer. It depends on Zn(2+) as a cofactor. Co(2+) serves as cofactor.

The enzyme catalyses N-succinyl-(2S,6S)-2,6-diaminopimelate + H2O = (2S,6S)-2,6-diaminopimelate + succinate. It participates in amino-acid biosynthesis; L-lysine biosynthesis via DAP pathway; LL-2,6-diaminopimelate from (S)-tetrahydrodipicolinate (succinylase route): step 3/3. Catalyzes the hydrolysis of N-succinyl-L,L-diaminopimelic acid (SDAP), forming succinate and LL-2,6-diaminopimelate (DAP), an intermediate involved in the bacterial biosynthesis of lysine and meso-diaminopimelic acid, an essential component of bacterial cell walls. This is Succinyl-diaminopimelate desuccinylase from Buchnera aphidicola subsp. Cinara cedri (strain Cc).